The following is a 4462-amino-acid chain: Dynein axonemal heavy chain 17 (4462 aa).

The segment at 1 to 1808 (MTMAPDVRLE…FANICDAQIQ (1808 aa)) is stem. TPR repeat units lie at residues 1019–1052 (TWTD…VSKC) and 1702–1736 (IWWT…QLNV). AAA regions lie at residues 1809–2030 (YSYE…VLVV), 2090–2311 (KIIK…FGFK), 2417–2665 (ELDP…IFQG), and 2763–3012 (SYNE…ERRY). Residues 1847–1854 (GPAGTGKT), 2128–2135 (GNAGSGKS), 2455–2462 (GNAGTGKS), and 2801–2808 (GVGGSGKQ) contribute to the ATP site. Coiled coils occupy residues 3027–3086 (YQNL…LIQV) and 3257–3309 (DVAP…EKIK). Residues 3027–3313 (YQNLLAKKRT…TAEKIKCQQE (287 aa)) are stalk. AAA regions lie at residues 3405–3632 (LTDD…EIEE) and 3842–4068 (IKNF…VLYN). A TPR 3 repeat occupies 4147–4182 (PESPYLYGLHPNAEIGFLTVTSEKLFRTVLEMQPKE).

It belongs to the dynein heavy chain family. Consists of at least two heavy chains and a number of intermediate and light chains. In terms of tissue distribution, expressed in testis. Expressed in spermatozoa (at protein level). Not detected in airway epithelial cells (at protein level).

It is found in the cytoplasm. Its subcellular location is the cytoskeleton. The protein localises to the flagellum axoneme. In terms of biological role, force generating protein component of the outer dynein arms (ODAs) in the sperm flagellum. Produces force towards the minus ends of microtubules. Dynein has ATPase activity; the force-producing power stroke is thought to occur on release of ADP. Plays a major role in sperm motility, implicated in sperm flagellar assembly and beating. This Homo sapiens (Human) protein is Dynein axonemal heavy chain 17.